Reading from the N-terminus, the 76-residue chain is FMRFamide-related neuropeptides (76 aa).

The first 27 residues, M1 to A27, serve as a signal peptide directing secretion. The residue at position 39 (F39) is a Phenylalanine amide.

This sequence belongs to the FARP (FMRFamide related peptide) family. As to expression, olfactory lobe and accessory lobe, olfactory globular tract, olfactory lobe cells (at protein level). Widely distributed throughout nervous system.

The protein resides in the secreted. GYRKPPFNGSIF-amide may be involved in olfaction and contraction of hindgut. The protein is FMRFamide-related neuropeptides of Procambarus clarkii (Red swamp crayfish).